A 367-amino-acid polypeptide reads, in one-letter code: UDP-D-xylose:L-fucose alpha-1,3-D-xylosyltransferase (367 aa).

Polar residues predominate over residues 1 to 10 (MAQKQQTLHQ). Residues 1 to 21 (MAQKQQTLHQQRPFSSSPRSY) are disordered. Residues 1–35 (MAQKQQTLHQQRPFSSSPRSYSSISNRPIFLLSRN) are Cytoplasmic-facing. Residues 12-21 (RPFSSSPRSY) are compositionally biased toward low complexity. Residues 36–56 (GLLLVLLALFLLLGVFLPWPG) form a helical; Signal-anchor for type II membrane protein membrane-spanning segment. Residues 57–367 (SPLLLFPNKV…ALESPLGKLQ (311 aa)) are Lumenal-facing. 3 N-linked (GlcNAc...) asparagine glycosylation sites follow: Asn-85, Asn-98, and Asn-173. The DXD motif signature appears at 196–198 (DVD). 2 N-linked (GlcNAc...) asparagine glycosylation sites follow: Asn-228 and Asn-292.

The protein belongs to the glycosyltransferase 77 family. Mn(2+) serves as cofactor. It depends on Mg(2+) as a cofactor. Post-translationally, glycosylated. In terms of tissue distribution, expressed in roots, rosette leaves, stems and flowers.

It is found in the golgi apparatus membrane. Its function is as follows. Catalyzes the transfer of D-xylose from UDP-alpha-D-xylose onto L-fucose. Probably involved in the biosynthesis of rhamnogalacturonan II (RG-II) through xylosylation of the internal fucose moiety of the A-chain of RG-II, a structurally complex pectic polysaccharide of the primary cell wall. RG-II is essential for the cell wall integrity of rapidly growing tissues such as roots and pollen tube growth and elongation. The sequence is that of UDP-D-xylose:L-fucose alpha-1,3-D-xylosyltransferase from Arabidopsis thaliana (Mouse-ear cress).